A 470-amino-acid chain; its full sequence is Poly(A) polymerase catalytic subunit (470 aa).

Active-site residues include Asp-192 and Asp-194.

It belongs to the poxviridae poly(A) polymerase catalytic subunit family. Heterodimer of a large (catalytic) subunit and a small (regulatory) subunit.

The enzyme catalyses RNA(n) + ATP = RNA(n)-3'-adenine ribonucleotide + diphosphate. Functionally, polymerase that creates the 3'-poly(A) tail of mRNA's. This is Poly(A) polymerase catalytic subunit (PAPL) from Sus scrofa (Pig).